Consider the following 309-residue polypeptide: Vomeronasal type-1 receptor 46 (309 aa).

The Extracellular portion of the chain corresponds to 1-20 (MNKANIFCTDTNMKVILFSE). Residues 21-41 (VSVGISANSILFISHLCMFLG) form a helical membrane-spanning segment. The Cytoplasmic portion of the chain corresponds to 42–50 (ESRPKPIDL). The helical transmembrane segment at 51–71 (YIAFFSLTHLMLLVTMGLIAV) threads the bilayer. Topologically, residues 72-85 (DMFMPGGRWDSTTC) are extracellular. Cys-85 and Cys-171 form a disulfide bridge. The chain crosses the membrane as a helical span at residues 86-106 (TFLMYLHIVLRGPTLCATCLL). Residues 107-134 (NVLWTITLSPRNSCLTKFKHKSPHHISG) are Cytoplasmic-facing. A helical membrane pass occupies residues 135 to 155 (AFLFLCVLYMSLSSELLSITA). Topologically, residues 156 to 192 (SLNLTSENFLYVSQSCSILPMSYSIKSMFSTKMAIRE) are extracellular. N-linked (GlcNAc...) asparagine glycosylation is present at Asn-158. A helical membrane pass occupies residues 193 to 213 (AFLIGLMVLSSGYMVALLWSH). Topologically, residues 214-237 (KKQAQHLHSNSLSLKASPEQRATR) are cytoplasmic. Residues 238 to 258 (TIMLLMSFFVVFYILDSVIFY) form a helical membrane-spanning segment. The Extracellular portion of the chain corresponds to 259–267 (SRMKFKDDS). Residues 268–288 (IFVCVQIIVSHSYVTVSPFVF) form a helical membrane-spanning segment. Topologically, residues 289-309 (ICTEKHIIKFFWSLCGRIVNI) are cytoplasmic.

Belongs to the G-protein coupled receptor 1 family.

The protein resides in the cell membrane. Its function is as follows. Putative pheromone receptor implicated in the regulation of social and reproductive behavior. The sequence is that of Vomeronasal type-1 receptor 46 (Vmn1r46) from Mus musculus (Mouse).